Reading from the N-terminus, the 85-residue chain is Small ribosomal subunit protein bS20 (85 aa).

It belongs to the bacterial ribosomal protein bS20 family.

In terms of biological role, binds directly to 16S ribosomal RNA. The sequence is that of Small ribosomal subunit protein bS20 from Borrelia turicatae (strain 91E135).